Here is a 449-residue protein sequence, read N- to C-terminus: Protein king tubby (449 aa).

The disordered stretch occupies residues 123-197 (SAVHSANSTQ…GTGGESEGDV (75 aa)). The segment covering 124–145 (AVHSANSTQSQRPRPRQHSFSD) has biased composition (polar residues). Position 142 is a phosphoserine (Ser142). Positions 154-166 (NRNVAAAAPVRPA) are enriched in low complexity. Residues 183–192 (NGTGNGTGGE) are compositionally biased toward gly residues.

This sequence belongs to the TUB family.

The protein resides in the cytoplasm. Its subcellular location is the nucleus. It is found in the cell projection. It localises to the cilium membrane. The protein localises to the rhabdomere. This Drosophila ananassae (Fruit fly) protein is Protein king tubby.